We begin with the raw amino-acid sequence, 531 residues long: MACLLPAAQTLPAGFLFLVLWASVLGDKLLVVPQDGSHWLSMKEIVEHLSERGHDIMVLVPEVNLLLGESKYYRRKIFSVTYSLEELQTRFRTFGNNHFLPGASLMGPLREYRNNMIVVDMFFSNCQSLLKDSATLSFLRENKFDALFTDPAMPCGVILAEYLNLPSVYLFRGFPCSLEHMLGQSPSPVSYVPRFYTKFSDHMTFPQRLANFIVNILENYLYYCLYSKYEIIASDLLKRDVSLPSLHQNSLWLLRYDFVFEYPRPVMPNMIFLGGINCKKKGKLTQEFEAYVNASGEHGIVVFSLGSMVSEIPEKKAMEIAEALGRIPQTVLWRYTGTRPSNLAKNTILVKWLPQNDLLGHPKTRAFITHSGSHGIYEGICNGVPMVMMPLFGDQMDNAKRMETRGAGVTLNVLEMTADDLENALKTVINNKSYKENIMRLSSLHKDRPIEPLDLAVFWVEYVMRHKGAPHLRPAAHDLTWYQYHSLDVIGFLLAIVLTVVFIVFKCCAYGCRKCFGGKGRVKKSHKSKTH.

Residues 1 to 26 form the signal peptide; the sequence is MACLLPAAQTLPAGFLFLVLWASVLG. N-linked (GlcNAc...) asparagine glycans are attached at residues Asn293 and Asn431. Residues 489–505 form a helical membrane-spanning segment; sequence VIGFLLAIVLTVVFIVF.

Belongs to the UDP-glycosyltransferase family. Expressed in liver, kidney and at very low levels in colon.

Its subcellular location is the microsome. It is found in the endoplasmic reticulum membrane. The catalysed reaction is glucuronate acceptor + UDP-alpha-D-glucuronate = acceptor beta-D-glucuronoside + UDP + H(+). It carries out the reaction (5Z,8Z,11Z,14Z)-eicosatetraenoate + UDP-alpha-D-glucuronate = O-[(5Z),(8Z),(11Z),(14Z)-eicosatetraenoyl]-beta-D-glucuronate + UDP. The enzyme catalyses 15-hydroxy-(5Z,8Z,11Z,13E)-eicosatetraenoate + UDP-alpha-D-glucuronate = 15-O-(beta-D-glucuronosyl)-(5Z,8Z,11Z,14Z)-eicosatetraenoate + UDP + H(+). It catalyses the reaction (E)-ferulate + UDP-alpha-D-glucuronate = (E)-4-O-(beta-D-glucuronosyl)-ferulate + UDP + H(+). The catalysed reaction is (E)-ferulate + UDP-alpha-D-glucuronate = (E)-ferulic acid beta-D-glucuronate ester + UDP. Its function is as follows. UDP-glucuronosyltransferase (UGT) that catalyzes phase II biotransformation reactions in which lipophilic substrates are conjugated with glucuronic acid to facilitate their inactivation and excretion from the body. Essential for the elimination and detoxification of drugs, xenobiotics and endogenous compounds. Involved in the glucuronidation of arachidonic acid (AA) and AA-derived eicosanoids including 15-HETE and 20-HETE. Conjugates small planar phenolic molecules such as 4-nitrophenol, 1-naphthol, and 4-methylumbelliferone. The bulky phenol 4-hydroxybiphenyl, androgens and estrogens are not substrates. 2-hydroxybiphenyl is an excellent substrate. Involved in the glucuronidation of the phytochemical ferulic acid at the phenolic or the carboxylic acid group. In Mus musculus (Mouse), this protein is UDP-glucuronosyltransferase 1A6.